Reading from the N-terminus, the 314-residue chain is Transcription factor DICHOTOMA (314 aa).

Positions 87–145 (KKDRHSKINRPQGPRDRRVRLSIGIARKFFDLQEMLGFDKPSKTLDWLLTKSKEAIKEL) constitute a TCP domain. In terms of domain architecture, R spans 201-218 (KESRAKARARARERTKEK).

The protein localises to the nucleus. Its function is as follows. Transcription regulator involved in the dorsovental asymmetry of flowers. Promotes dorsal identity. This chain is Transcription factor DICHOTOMA (DICH), found in Antirrhinum majus (Garden snapdragon).